The primary structure comprises 48 residues: MFLFNLEQSIGLLPEAYLPFDPLVDVLPIIPLLFLLLAFVWQAAVKFR.

Positions 1 to 11 (MFLFNLEQSIG) are excised as a propeptide. The chain crosses the membrane as a helical span at residues 23–43 (LVDVLPIIPLLFLLLAFVWQA).

The protein belongs to the PsbK family. PSII is composed of 1 copy each of membrane proteins PsbA, PsbB, PsbC, PsbD, PsbE, PsbF, PsbH, PsbI, PsbJ, PsbK, PsbL, PsbM, PsbT, PsbX, PsbY, PsbZ, Psb30/Ycf12, at least 3 peripheral proteins of the oxygen-evolving complex and a large number of cofactors. It forms dimeric complexes.

The protein resides in the plastid. It is found in the chloroplast thylakoid membrane. Its function is as follows. One of the components of the core complex of photosystem II (PSII). PSII is a light-driven water:plastoquinone oxidoreductase that uses light energy to abstract electrons from H(2)O, generating O(2) and a proton gradient subsequently used for ATP formation. It consists of a core antenna complex that captures photons, and an electron transfer chain that converts photonic excitation into a charge separation. The chain is Photosystem II reaction center protein K from Lepocinclis buetschlii.